Reading from the N-terminus, the 382-residue chain is Lipid-A-disaccharide synthase (382 aa).

Belongs to the LpxB family.

The enzyme catalyses 2-N,3-O-bis[(3R)-3-hydroxytetradecanoyl]-alpha-D-glucosaminyl 1-phosphate + UDP-2-N,3-O-bis[(3R)-3-hydroxytetradecanoyl]-alpha-D-glucosamine = lipid A disaccharide (E. coli) + UDP + H(+). The catalysed reaction is a lipid X + a UDP-2-N,3-O-bis[(3R)-3-hydroxyacyl]-alpha-D-glucosamine = a lipid A disaccharide + UDP + H(+). It functions in the pathway glycolipid biosynthesis; lipid IV(A) biosynthesis; lipid IV(A) from (3R)-3-hydroxytetradecanoyl-[acyl-carrier-protein] and UDP-N-acetyl-alpha-D-glucosamine: step 5/6. Functionally, condensation of UDP-2,3-diacylglucosamine and 2,3-diacylglucosamine-1-phosphate to form lipid A disaccharide, a precursor of lipid A, a phosphorylated glycolipid that anchors the lipopolysaccharide to the outer membrane of the cell. The sequence is that of Lipid-A-disaccharide synthase from Escherichia coli O157:H7.